A 122-amino-acid chain; its full sequence is Large ribosomal subunit protein uL18 (122 aa).

This sequence belongs to the universal ribosomal protein uL18 family. As to quaternary structure, part of the 50S ribosomal subunit; part of the 5S rRNA/L5/L18/L25 subcomplex. Contacts the 5S and 23S rRNAs.

Functionally, this is one of the proteins that bind and probably mediate the attachment of the 5S RNA into the large ribosomal subunit, where it forms part of the central protuberance. The sequence is that of Large ribosomal subunit protein uL18 from Leptospira borgpetersenii serovar Hardjo-bovis (strain JB197).